The following is a 1423-amino-acid chain: DNA-directed RNA polymerase subunit beta' (1423 aa).

Cysteine 71, cysteine 73, cysteine 86, and cysteine 89 together coordinate Zn(2+). Aspartate 461, aspartate 463, and aspartate 465 together coordinate Mg(2+). Residues cysteine 815, cysteine 889, cysteine 896, and cysteine 899 each contribute to the Zn(2+) site.

The protein belongs to the RNA polymerase beta' chain family. In terms of assembly, the RNAP catalytic core consists of 2 alpha, 1 beta, 1 beta' and 1 omega subunit. When a sigma factor is associated with the core the holoenzyme is formed, which can initiate transcription. Requires Mg(2+) as cofactor. It depends on Zn(2+) as a cofactor.

It catalyses the reaction RNA(n) + a ribonucleoside 5'-triphosphate = RNA(n+1) + diphosphate. DNA-dependent RNA polymerase catalyzes the transcription of DNA into RNA using the four ribonucleoside triphosphates as substrates. This is DNA-directed RNA polymerase subunit beta' from Actinobacillus pleuropneumoniae serotype 3 (strain JL03).